The chain runs to 586 residues: Proteasome-associated ATPase (586 aa).

The stretch at 11–76 forms a coiled coil; sequence AWRELEAVRA…LREEVDRLGQ (66 aa). Position 273–278 (273–278) interacts with ATP; the sequence is GCGKTL. The tract at residues 585-586 is docks into pockets in the proteasome alpha-ring; sequence YL.

This sequence belongs to the AAA ATPase family. In terms of assembly, homohexamer. Assembles into a hexameric ring structure that caps the 20S proteasome core. Strongly interacts with the prokaryotic ubiquitin-like protein Pup through a hydrophobic interface; the interacting region of ARC lies in its N-terminal coiled-coil domain. There is one Pup binding site per ARC hexamer ring. Upon ATP-binding, the C-terminus of ARC interacts with the alpha-rings of the proteasome core, possibly by binding to the intersubunit pockets.

It functions in the pathway protein degradation; proteasomal Pup-dependent pathway. Functionally, ATPase which is responsible for recognizing, binding, unfolding and translocation of pupylated proteins into the bacterial 20S proteasome core particle. May be essential for opening the gate of the 20S proteasome via an interaction with its C-terminus, thereby allowing substrate entry and access to the site of proteolysis. Thus, the C-termini of the proteasomal ATPase may function like a 'key in a lock' to induce gate opening and therefore regulate proteolysis. The chain is Proteasome-associated ATPase from Nocardia farcinica (strain IFM 10152).